The chain runs to 570 residues: Dihydroxy-acid dehydratase (570 aa).

Cys-61 serves as a coordination point for [2Fe-2S] cluster. Asp-94 is a Mg(2+) binding site. Residue Cys-135 participates in [2Fe-2S] cluster binding. Asp-136 and Lys-137 together coordinate Mg(2+). Lys-137 is modified (N6-carboxylysine). Cys-207 contributes to the [2Fe-2S] cluster binding site. Glu-459 is a binding site for Mg(2+). Ser-485 functions as the Proton acceptor in the catalytic mechanism.

This sequence belongs to the IlvD/Edd family. As to quaternary structure, homodimer. The cofactor is [2Fe-2S] cluster. Mg(2+) serves as cofactor.

It carries out the reaction (2R)-2,3-dihydroxy-3-methylbutanoate = 3-methyl-2-oxobutanoate + H2O. The enzyme catalyses (2R,3R)-2,3-dihydroxy-3-methylpentanoate = (S)-3-methyl-2-oxopentanoate + H2O. It functions in the pathway amino-acid biosynthesis; L-isoleucine biosynthesis; L-isoleucine from 2-oxobutanoate: step 3/4. It participates in amino-acid biosynthesis; L-valine biosynthesis; L-valine from pyruvate: step 3/4. Functionally, functions in the biosynthesis of branched-chain amino acids. Catalyzes the dehydration of (2R,3R)-2,3-dihydroxy-3-methylpentanoate (2,3-dihydroxy-3-methylvalerate) into 2-oxo-3-methylpentanoate (2-oxo-3-methylvalerate) and of (2R)-2,3-dihydroxy-3-methylbutanoate (2,3-dihydroxyisovalerate) into 2-oxo-3-methylbutanoate (2-oxoisovalerate), the penultimate precursor to L-isoleucine and L-valine, respectively. This is Dihydroxy-acid dehydratase from Lactococcus lactis subsp. cremoris (strain MG1363).